Reading from the N-terminus, the 7968-residue chain is Obscurin (7968 aa).

5 consecutive Ig-like domains span residues 10–100 (PRFL…LQVD), 110–202 (PHFL…LVVD), 236–322 (PASP…QTYS), 331–414 (PAVP…RTVA), and 420–508 (GNLL…VSAP). A disulfide bond links C31 and C82. The interval 228–249 (EAMRAEGAPASPPSTGTRTCTV) is disordered. The span at 240–249 (PSTGTRTCTV) shows a compositional bias: polar residues. 2 disulfide bridges follow: C259/C311 and C354/C404. Phosphoserine is present on S395. One can recognise a Fibronectin type-III 1 domain in the interval 515–612 (PPVDPVVKAR…FPGTVHLAPK (98 aa)). Ig-like domains are found at residues 619 to 698 (LKAV…MEVR), 701 to 790 (PGLT…YQLS), 798 to 884 (LHKD…LRVS), 886 to 977 (PKVV…DVKE), 978 to 1066 (PKVV…FRLH), 1070 to 1161 (PKMM…HITE), 1162 to 1252 (PKGV…LHIT), 1254 to 1345 (PKAV…DVSE), 1346 to 1432 (PKAV…LSFS), 1438 to 1524 (PKVV…LSFH), 1530 to 1621 (PKAV…HVAE), and 1622 to 1719 (PKVV…PQIS). 12 disulfides stabilise this stretch: C819–C870, C912–C962, C1004–C1054, C1096–C1146, C1188–C1238, C1280–C1330, C1372–C1422, C1464–C1514, C1556–C1606, C1648–C1698, C1723–C1791, and C1830–C1880. The Fibronectin type-III 2 domain maps to 1731-1808 (KEHEDIILTA…DFPVQVEEVA (78 aa)). Ig-like domains are found at residues 1809 to 1894 (AKFC…LTVS), 1896 to 1982 (PRVV…AALR), 1987 to 2071 (PVLF…AKLT), 2077 to 2162 (VRLV…LVVT), 2165 to 2249 (PVSF…ASVK), 2289 to 2380 (PVTL…QSIT), 2468 to 2559 (PVVL…REVT), 2564 to 2643 (LQDA…LEVR), 2646 to 2730 (PVVF…ARVR), 2736 to 2823 (VGIT…LIVR), 2826 to 2908 (PAAI…STAS), 2920 to 2999 (EELT…AQLL), 3003 to 3092 (RRVH…LRVT), 3095 to 3183 (PSVF…VHAR), 3184 to 3268 (PVRF…ATLT), 3273 to 3356 (PAQF…ASLT), 3359 to 3444 (PMPA…ATLT), 3449 to 3532 (PAKF…ATLT), 3537 to 3620 (PARF…AMLT), 3625 to 3708 (PIKF…AMLT), 3713 to 3796 (PSKF…ATLT), 3801 to 3884 (PARF…ATLT), 3890 to 3973 (PVFR…ATLT), 3978 to 4062 (PVRF…ASLS), 4068 to 4160 (PKFK…PEVT), 4171 to 4239 (TADE…NHAS), 4248 to 4337 (PEVT…LKVT), 4340 to 4427 (NTVV…FLTV), and 4430 to 4518 (WRLE…ARLT). Intrachain disulfides connect C2187–C2237, C2311–C2361, and C2490–C2540. C2668 and C2718 are joined by a disulfide. 2 disulfide bridges follow: C2848–C2898 and C2937–C2987. S2889 carries the phosphoserine modification. Cystine bridges form between C3117-C3167, C3206-C3256, C3295-C3344, C3383-C3432, C3471-C3520, C3559-C3608, C3647-C3696, C3735-C3784, C3823-C3872, C3911-C3961, C4000-C4050, and C4089-C4141. S4015 is modified (phosphoserine). Residues C4453 and C4508 are joined by a disulfide bond. A Fibronectin type-III 3 domain is found at 4525–4619 (PPEDAEVVAR…LPQTVRLAEP (95 aa)). Residues 4624 to 4714 (PPQPSAPESR…AAATFQVALS (91 aa)) form the Ig-like 47 domain. Residues 4749–4785 (MSREPTLDSISELPEEDGRSQRLPQEAEEVAPDLSEG) form a disordered region. S4750 bears the Phosphoserine mark. The residue at position 4754 (T4754) is a Phosphothreonine. S4757 bears the Phosphoserine mark. T4788 is subject to Phosphothreonine. A Phosphoserine modification is found at S4805. The disordered stretch occupies residues 4820-4860 (LKKAGRPGTSPLASKVGAPAAPSVKPQQQQEPLAAVRPPLG). The IQ domain occupies 4872-4901 (MDKAAVKIQAAFKGYKVRKEMKQQEGPMFS). 2 consecutive Ig-like domains span residues 4898-4989 (PMFS…VVVS) and 5126-5215 (PVFL…AELR). 2 disulfides stabilise this stretch: C4919-C4971 and C5147-C5199. Residues 5238 to 5256 (AQGYLSSREQEGTESTTDE) are compositionally biased toward polar residues. Residues 5238–5257 (AQGYLSSREQEGTESTTDEG) are disordered. 2 consecutive Ig-like domains span residues 5260 to 5349 (PQVV…ARLL) and 5371 to 5467 (PRML…LHVS). Residues 5554–5596 (AKLQVPGGDSDEDSKTPSASPRHGRSRPSSSIQESSSESEDGD) form a disordered region. S5563 bears the Phosphoserine mark. The residue at position 5569 (T5569) is a Phosphothreonine. Residues 5570-5589 (PSASPRHGRSRPSSSIQESS) are compositionally biased toward low complexity. Residues S5571 and S5573 each carry the phosphoserine modification. The 68-residue stretch at 5600-5667 (EIFDIYVVTA…SPAYLDRRLK (68 aa)) folds into the SH3 domain. Residues 5693–5877 (RLSSVIQELL…SALPQRAENK (185 aa)) form the DH domain. Positions 5895–6004 (EPIRQGHFIV…WVKEICGIQQ (110 aa)) constitute a PH domain. R5975 contributes to the a 1,2-diacyl-sn-glycero-3-phospho-(1D-myo-inositol-4,5-bisphosphate) binding site. An a 1,2-diacyl-sn-glycero-3-phospho-(1D-myo-inositol-3,4-bisphosphate)-binding site is contributed by R5980. Ig-like domains follow at residues 6014–6097 (PDFE…GNCS) and 6108–6200 (PRFV…LRIQ). Cystine bridges form between C6035-C6087 and C6129-C6182. Residues 6237-6296 (RLLGPKAPGPSTGDLTGPGPCPRGAPALQETGSQPPVTGTSEAPAVPPRVPQPLLHEGPE) are disordered. Polar residues predominate over residues 6266 to 6277 (ETGSQPPVTGTS). In terms of domain architecture, Ig-like 54 spans 6357–6445 (PSMQVTIEDV…GQVLCKAELL (89 aa)). Residues 6468–6721 (YEVKEEIGRG…AAQCLSHPWF (254 aa)) form the Protein kinase 1 domain. ATP-binding positions include 6474-6482 (IGRGVFGFV) and K6497. The active-site Proton acceptor is D6587. 3 disordered regions span residues 6777 to 6863 (GVAR…AQGC), 6952 to 7176 (SGTH…TMRK), and 7217 to 7272 (VSQS…TPWE). Position 6831 is a phosphoserine (S6831). Residues 7052–7061 (AVAPCPPGSF) show a composition bias toward pro residues. The span at 7115–7139 (SSPGSASQASSSQVSSLRVGSSQVG) shows a compositional bias: low complexity. Over residues 7160 to 7172 (DSTPTLQRPQEQA) the composition is skewed to polar residues. Over residues 7227-7242 (EARAESQSEEQQEARA) the composition is skewed to basic and acidic residues. S7244 carries the phosphoserine modification. The region spanning 7463–7552 (PTFLRELSDE…GTVTTTGVLR (90 aa)) is the Ig-like 55 domain. A disulfide bridge connects residues C7484 and C7536. The 93-residue stretch at 7557–7649 (PSSSPCPDIG…PSEQVLLGGP (93 aa)) folds into the Fibronectin type-III 4 domain. One can recognise a Protein kinase 2 domain in the interval 7672–7924 (FAFQTQIQRG…ASSCLQCPWL (253 aa)). ATP contacts are provided by residues 7678–7686 (IQRGRFSVV) and K7701. Catalysis depends on D7791, which acts as the Proton acceptor.

This sequence belongs to the protein kinase superfamily. CAMK Ser/Thr protein kinase family. In terms of assembly, interacts (via protein kinase domain 2) with CDH2 and (via protein kinase domain 1) with ATP1B1. Isoform 3 interacts with TTN/titin and calmodulin. Isoform 3 interacts with ANK1 isoform Mu17/ank1.5. Mg(2+) is required as a cofactor. Post-translationally, autophosphorylated by protein kinase domains 1 and 2.

The protein resides in the cytoplasm. It localises to the myofibril. The protein localises to the sarcomere. Its subcellular location is the m line. It is found in the z line. The protein resides in the cell membrane. It localises to the sarcolemma. The protein localises to the nucleus. It carries out the reaction L-seryl-[protein] + ATP = O-phospho-L-seryl-[protein] + ADP + H(+). The catalysed reaction is L-threonyl-[protein] + ATP = O-phospho-L-threonyl-[protein] + ADP + H(+). In terms of biological role, structural component of striated muscles which plays a role in myofibrillogenesis. Probably involved in the assembly of myosin into sarcomeric A bands in striated muscle. Has serine/threonine protein kinase activity and phosphorylates N-cadherin CDH2 and sodium/potassium-transporting ATPase subunit ATP1B1. Binds (via the PH domain) strongly to phosphatidylinositol 3,4-bisphosphate (PtdIns(3,4)P2) and phosphatidylinositol 4,5-bisphosphate (PtdIns(4,5)P2), and to a lesser extent to phosphatidylinositol 3-phosphate (PtdIns(3)P), phosphatidylinositol 4-phosphate (PtdIns(4)P), phosphatidylinositol 5-phosphate (PtdIns(5)P) and phosphatidylinositol 3,4,5-trisphosphate (PtdIns(3,4,5)P3). In Homo sapiens (Human), this protein is Obscurin (OBSCN).